We begin with the raw amino-acid sequence, 334 residues long: GTPase Obg (334 aa).

The 159-residue stretch at 1 to 159 (MRFVDEVVIK…KEVRLELNLL (159 aa)) folds into the Obg domain. In terms of domain architecture, OBG-type G spans 160–331 (ADVALLGLPN…LAKKLNEFLQ (172 aa)). GTP-binding positions include 166–173 (GLPNAGKS), 191–195 (FTTMY), 212–215 (DIPG), 282–285 (NKID), and 312–314 (SAA). Residues Ser-173 and Thr-193 each contribute to the Mg(2+) site.

This sequence belongs to the TRAFAC class OBG-HflX-like GTPase superfamily. OBG GTPase family. As to quaternary structure, monomer. Requires Mg(2+) as cofactor.

It is found in the cytoplasm. An essential GTPase which binds GTP, GDP and possibly (p)ppGpp with moderate affinity, with high nucleotide exchange rates and a fairly low GTP hydrolysis rate. Plays a role in control of the cell cycle, stress response, ribosome biogenesis and in those bacteria that undergo differentiation, in morphogenesis control. The chain is GTPase Obg from Francisella tularensis subsp. tularensis (strain FSC 198).